Here is a 342-residue protein sequence, read N- to C-terminus: Spore photoproduct lyase (342 aa).

In terms of domain architecture, Radical SAM core spans 77-305 (SKPSAEYAIP…EEKRRYKWGR (229 aa)). Residues C91, C95, and C98 each coordinate [4Fe-4S] cluster. Positions 218–235 (EAAVKVAKAGYPLGFIVA) form a DNA-binding region, H-T-H motif.

Belongs to the radical SAM superfamily. SPL family. Monomer or homodimer. It depends on [4Fe-4S] cluster as a cofactor. Requires S-adenosyl-L-methionine as cofactor.

It catalyses the reaction (5R)-5,6-dihydro-5-(thymidin-7-yl)thymidine in DNA = a thymidine dimer in DNA. Functionally, involved in repair of UV radiation-induced DNA damage during spore germination. Can repair thymine dimer 5-thyminyl-5,6-dihydrothymine (known as spore photoproduct (SP)) by in situ monomerization of SP to two thymines. This Bacillus subtilis (strain 168) protein is Spore photoproduct lyase (splB).